Reading from the N-terminus, the 99-residue chain is PE family protein PE13 (99 aa).

Residues 1–93 enclose the PE domain; that stretch reads MSFVMAYPEM…ASSYAATEVA (93 aa).

This sequence belongs to the mycobacterial PE family.

The protein resides in the secreted. It localises to the cell wall. In terms of biological role, may play a pivotal role in the interaction between M.tuberculosis and host. Can enhance the survival within macrophages under stress conditions such as H(2)O(2), SDS and low pH. Increases the production of IL-6 and IL-1beta from macrophages, and decreases the secretion of suppressor of cytokine signaling 3 (SOCS-3). These changes probably involve the p38-ERK-NF-kappa-B signaling pathway. Also precipitates the macrophage death. The protein is PE family protein PE13 of Mycobacterium tuberculosis (strain ATCC 25618 / H37Rv).